The chain runs to 264 residues: GTP cyclohydrolase FolE2 (264 aa).

Belongs to the GTP cyclohydrolase IV family.

The catalysed reaction is GTP + H2O = 7,8-dihydroneopterin 3'-triphosphate + formate + H(+). It participates in cofactor biosynthesis; 7,8-dihydroneopterin triphosphate biosynthesis; 7,8-dihydroneopterin triphosphate from GTP: step 1/1. Functionally, converts GTP to 7,8-dihydroneopterin triphosphate. In Vesicomyosocius okutanii subsp. Calyptogena okutanii (strain HA), this protein is GTP cyclohydrolase FolE2.